The primary structure comprises 195 residues: Peptide methionine sulfoxide reductase MsrA 2 (195 aa).

Cys-18 is a catalytic residue.

This sequence belongs to the MsrA Met sulfoxide reductase family.

It catalyses the reaction L-methionyl-[protein] + [thioredoxin]-disulfide + H2O = L-methionyl-(S)-S-oxide-[protein] + [thioredoxin]-dithiol. The enzyme catalyses [thioredoxin]-disulfide + L-methionine + H2O = L-methionine (S)-S-oxide + [thioredoxin]-dithiol. Functionally, has an important function as a repair enzyme for proteins that have been inactivated by oxidation. Catalyzes the reversible oxidation-reduction of methionine sulfoxide in proteins to methionine. The polypeptide is Peptide methionine sulfoxide reductase MsrA 2 (msrA2) (Mesorhizobium japonicum (strain LMG 29417 / CECT 9101 / MAFF 303099) (Mesorhizobium loti (strain MAFF 303099))).